The sequence spans 208 residues: MSLFITFEGGEGCGKSTQSKALYRYLKKKGLGCVLTHEPGGSKSGDKITRLLKWSKEEHISPLTELLLFNASRSILIDNVIKPALQDGKIVICDRYTDSTLAYQGYGRGLDLDTVKCVNSLASGGLVPDLTIWLDMDDKAALLRKGELPPDRFESENNGFHQRVRNGFGAIYATEPDRFLKLDASLPQSEIFSRIKQRVTILLGCRNE.

9 to 16 is an ATP binding site; the sequence is GGEGCGKS.

This sequence belongs to the thymidylate kinase family.

It carries out the reaction dTMP + ATP = dTDP + ADP. Its function is as follows. Phosphorylation of dTMP to form dTDP in both de novo and salvage pathways of dTTP synthesis. The sequence is that of Thymidylate kinase from Dehalococcoides mccartyi (strain ATCC BAA-2100 / JCM 16839 / KCTC 5957 / BAV1).